The primary structure comprises 1631 residues: ALK tyrosine kinase receptor (1631 aa).

Residues 1-18 form the signal peptide; the sequence is MGSVGLLGLLLLRLSVTA. The Extracellular portion of the chain corresponds to 19–1053; that stretch reads SGSGAGTGSG…PHLPLSLVLS (1035 aa). Residues 20–53 are disordered; that stretch reads GSGAGTGSGTGSGTGTGTGQLVGSPATGPALQPR. Positions 21-39 are enriched in gly residues; that stretch reads SGAGTGSGTGSGTGTGTGQ. Residues 60–82 are heparin-binding region; the sequence is RLQRKSLAVDFVVPSLFRVYARD. N-linked (GlcNAc...) asparagine glycans are attached at residues N185, N260, N301, N340, N427, N440, N461, N579, N587, and N643. Positions 280 to 443 constitute an MAM 1 domain; that stretch reads LECSFDFPCE…DFFALKNCSE (164 aa). Positions 494–652 constitute an MAM 2 domain; sequence FYCNFENGFC…NISISLDCYL (159 aa). Cysteines 703 and 716 form a disulfide. N724 carries an N-linked (GlcNAc...) asparagine glycan. Cysteines 798 and 809 form a disulfide. N823, N878, N879, and N901 each carry an N-linked (GlcNAc...) asparagine glycan. A disulfide bridge connects residues C921 and C943. N1001 carries N-linked (GlcNAc...) asparagine glycosylation. 3 disulfide bridges follow: C1002–C1010, C1005–C1021, and C1023–C1036. Residues 1002 to 1040 form an EGF-like region; that stretch reads CSHCEGDECHMDPESHKVICFCDHGTVLAEDGVSCIVSP. The helical transmembrane segment at 1054–1074 threads the bilayer; that stretch reads VVTSALVAALVLAFSGIMIVY. The Cytoplasmic segment spans residues 1075-1631; that stretch reads RRKHQELQAM…DALLKTPPGP (557 aa). Residues 1131–1407 form the Protein kinase domain; it reads ITLIRGLGHG…IEYCTQDPDV (277 aa). ATP-binding positions include 1137–1145 and K1165; that span reads LGHGAFGEV. The active-site Proton acceptor is D1264. Disordered stretches follow at residues 1423-1493, 1526-1554, and 1609-1631; these read EEKV…GHVN, WFTE…REGS, and FEGT…PPGP.

Homodimer; homodimerizes following heparin- and ligand-binding. Interacts with CBL, IRS1, PIK3R1 and PLCG1. Interacts with FRS2 and SHC1. Interacts with PTN and MDK. Post-translationally, phosphorylated at tyrosine residues by autocatalysis, which activates kinase activity. In cells not stimulated by a ligand, receptor protein tyrosine phosphatase beta and zeta complex (PTPRB/PTPRZ1) dephosphorylates ALK at the sites in ALK that are undergoing autophosphorylation through autoactivation.

The protein localises to the cell membrane. The catalysed reaction is L-tyrosyl-[protein] + ATP = O-phospho-L-tyrosyl-[protein] + ADP + H(+). With respect to regulation, activated upon ALKAL2 ligand-binding. ALKAL2-driven activation is coupled with heparin-binding. Following ligand-binding, homodimerizes and autophosphorylates, activating its kinase activity. Inactivated through dephosphorylation by receptor protein tyrosine phosphatase beta and zeta complex (PTPRB/PTPRZ1) when there is no stimulation by a ligand. Functionally, neuronal receptor tyrosine kinase that is essentially and transiently expressed in specific regions of the central and peripheral nervous systems and plays an important role in the genesis and differentiation of the nervous system. Also acts as a key thinness protein involved in the resistance to weight gain: in hypothalamic neurons, controls energy expenditure acting as a negative regulator of white adipose tissue lipolysis and sympathetic tone to fine-tune energy homeostasis. Following activation by ALKAL2 ligand at the cell surface, transduces an extracellular signal into an intracellular response. In contrast, ALKAL1 is not a potent physiological ligand for ALK. Ligand-binding to the extracellular domain induces tyrosine kinase activation, leading to activation of the mitogen-activated protein kinase (MAPK) pathway. Phosphorylates almost exclusively at the first tyrosine of the Y-x-x-x-Y-Y motif. Induces tyrosine phosphorylation of CBL, FRS2, IRS1 and SHC1, as well as of the MAP kinases MAPK1/ERK2 and MAPK3/ERK1. ALK activation may also be regulated by pleiotrophin (PTN) and midkine (MDK). PTN-binding induces MAPK pathway activation, which is important for the anti-apoptotic signaling of PTN and regulation of cell proliferation. MDK-binding induces phosphorylation of the ALK target insulin receptor substrate (IRS1), activates mitogen-activated protein kinases (MAPKs) and PI3-kinase, resulting also in cell proliferation induction. Drives NF-kappa-B activation, probably through IRS1 and the activation of the AKT serine/threonine kinase. Recruitment of IRS1 to activated ALK and the activation of NF-kappa-B are essential for the autocrine growth and survival signaling of MDK. The polypeptide is ALK tyrosine kinase receptor (Canis lupus familiaris (Dog)).